The chain runs to 475 residues: Probable proline--tRNA ligase, mitochondrial (475 aa).

A mitochondrion-targeting transit peptide spans 1–29 (MEGLLTRCRTLSALAACSLRHCRYIIHKC).

This sequence belongs to the class-II aminoacyl-tRNA synthetase family.

Its subcellular location is the mitochondrion matrix. It catalyses the reaction tRNA(Pro) + L-proline + ATP = L-prolyl-tRNA(Pro) + AMP + diphosphate. Mitochondrial aminoacyl-tRNA synthetase that catalyzes the specific attachment of the proline amino acid (aa) to the homologous transfer RNA (tRNA), further participating in protein synthesis. The reaction occurs in a two steps: proline is first activated by ATP to form Pro-AMP and then transferred to the acceptor end of tRNA(Pro). The chain is Probable proline--tRNA ligase, mitochondrial (Pars2) from Mus musculus (Mouse).